The sequence spans 466 residues: Methylenetetrahydrofolate--tRNA-(uracil-5-)-methyltransferase TrmFO (466 aa).

14 to 19 (GGGLAG) contributes to the FAD binding site.

This sequence belongs to the MnmG family. TrmFO subfamily. The cofactor is FAD.

It is found in the cytoplasm. The catalysed reaction is uridine(54) in tRNA + (6R)-5,10-methylene-5,6,7,8-tetrahydrofolate + NADH + H(+) = 5-methyluridine(54) in tRNA + (6S)-5,6,7,8-tetrahydrofolate + NAD(+). It carries out the reaction uridine(54) in tRNA + (6R)-5,10-methylene-5,6,7,8-tetrahydrofolate + NADPH + H(+) = 5-methyluridine(54) in tRNA + (6S)-5,6,7,8-tetrahydrofolate + NADP(+). Its function is as follows. Catalyzes the folate-dependent formation of 5-methyl-uridine at position 54 (M-5-U54) in all tRNAs. The chain is Methylenetetrahydrofolate--tRNA-(uracil-5-)-methyltransferase TrmFO from Brucella suis (strain ATCC 23445 / NCTC 10510).